A 96-amino-acid polypeptide reads, in one-letter code: MSAVVQQQGDLLLNLYIQPKASRDQIVGLHGDELKVAITAPPIDGKANAHLSKYLAKAFKVPKSDVYIIKGELGRHKQIRIVTPKLIPPEVSELLE.

This sequence belongs to the UPF0235 family.

This Shewanella sp. (strain W3-18-1) protein is UPF0235 protein Sputw3181_1321.